The sequence spans 312 residues: Putative B3 domain-containing protein Os10g0537100 (312 aa).

The TF-B3 DNA-binding region spans 35-153; it reads FEKVVTPSDV…RLFIDFRRRR (119 aa). Disordered stretches follow at residues 161-182 and 286-312; these read FPPT…HPPL and LLQL…DLGL. Basic residues predominate over residues 170-180; that stretch reads HSHHHHQRHHP. Low complexity predominate over residues 286-301; that stretch reads LLQLPSPSSSTSSSTA.

Its subcellular location is the nucleus. The polypeptide is Putative B3 domain-containing protein Os10g0537100 (Oryza sativa subsp. japonica (Rice)).